We begin with the raw amino-acid sequence, 162 residues long: Phosphopantetheine adenylyltransferase (162 aa).

A substrate-binding site is contributed by S11. Residues 11 to 12 (SF) and H19 contribute to the ATP site. Substrate-binding residues include K43, V76, and R90. Residues 91-93 (GLR), E101, and 126-132 (HLYISSS) contribute to the ATP site.

Belongs to the bacterial CoaD family. In terms of assembly, homohexamer. The cofactor is Mg(2+).

It localises to the cytoplasm. The catalysed reaction is (R)-4'-phosphopantetheine + ATP + H(+) = 3'-dephospho-CoA + diphosphate. The protein operates within cofactor biosynthesis; coenzyme A biosynthesis; CoA from (R)-pantothenate: step 4/5. Reversibly transfers an adenylyl group from ATP to 4'-phosphopantetheine, yielding dephospho-CoA (dPCoA) and pyrophosphate. The polypeptide is Phosphopantetheine adenylyltransferase (Streptococcus pneumoniae (strain CGSP14)).